Here is a 414-residue protein sequence, read N- to C-terminus: Probable solanesyl-diphosphate synthase 3, chloroplastic (414 aa).

Over residues 1 to 23 (MAAPSSLASSSHLSRRATAAASP) the composition is skewed to low complexity. Positions 1–36 (MAAPSSLASSSHLSRRATAAASPSIPPPSPPPPPQR) are disordered. A chloroplast-targeting transit peptide spans 1-72 (MAAPSSLASS…KPGVAAVDVP (72 aa)). Over residues 24 to 35 (SIPPPSPPPPPQ) the composition is skewed to pro residues. Residues Lys134, Arg137, and His172 each coordinate isopentenyl diphosphate. The Mg(2+) site is built by Asp179 and Asp183. Arg188 contributes to the an all-trans-polyprenyl diphosphate binding site. Arg189 is a binding site for isopentenyl diphosphate. Lys265, Thr266, Gln303, and Lys320 together coordinate an all-trans-polyprenyl diphosphate.

This sequence belongs to the FPP/GGPP synthase family. Homodimer. Mg(2+) serves as cofactor.

The protein localises to the plastid. Its subcellular location is the chloroplast. The enzyme catalyses 7 isopentenyl diphosphate + (2E)-geranyl diphosphate = all-trans-nonaprenyl diphosphate + 7 diphosphate. Functionally, involved in providing solanesyl diphosphate for plastoquinone-9 (PQ-9) formation. In Oryza sativa subsp. japonica (Rice), this protein is Probable solanesyl-diphosphate synthase 3, chloroplastic.